A 504-amino-acid chain; its full sequence is Tachykinin-like peptides receptor 86C (504 aa).

The Extracellular portion of the chain corresponds to 1–84; that stretch reads MSEIVDTELL…PYELPWEQKT (84 aa). 3 N-linked (GlcNAc...) asparagine glycosylation sites follow: N12, N28, and N36. The chain crosses the membrane as a helical span at residues 85–108; it reads IWAIIFGLMMFVAIAGNGIVLWIV. At 109–118 the chain is on the cytoplasmic side; sequence TGHRSMRTVT. The chain crosses the membrane as a helical span at residues 119 to 143; it reads NYFLLNLSIADLLMSSLNCVFNFIF. Topologically, residues 144-155 are extracellular; the sequence is MLNSDWPFGSIY. A helical transmembrane segment spans residues 156-179; the sequence is CTINNFVANVTVSTSVFTLVAISF. At 180–199 the chain is on the cytoplasmic side; sequence DRYIAIVHPLKRRTSRRKVR. Residues 200 to 224 form a helical membrane-spanning segment; that stretch reads IILVLIWALSCVLSAPCLLYSSIMT. Over 225–250 the chain is Extracellular; that stretch reads KHYYNGKSRTVCFMMWPDGRYPTSMA. The helical transmembrane segment at 251 to 275 threads the bilayer; that stretch reads DYAYNLIILVLTYGIPMIVMLICYS. Over 276 to 308 the chain is Cytoplasmic; it reads LMGRVLWGSRSIGENTDRQMESMKSKRKVVRMF. Residues 309 to 330 traverse the membrane as a helical segment; that stretch reads IAIVSIFAICWLPYHLFFIYAY. At 331–343 the chain is on the extracellular side; sequence HNNQVASTKYVQH. Residues 344-367 traverse the membrane as a helical segment; it reads MYLGFYWLAMSNAMVNPLIYYWMN. Residues 368–504 are Cytoplasmic-facing; that stretch reads KRFRMYFQRI…NPVELSPKQM (137 aa). The disordered stretch occupies residues 393 to 450; it reads PKSRLTNKNSSNRHTRAETKSQWKRSTMETQIQQAPVTSSCREQRSAQQQQPPGSGTN. Composition is skewed to polar residues over residues 395–404 and 416–450; these read SRLTNKNSSN and KRST…SGTN.

It belongs to the G-protein coupled receptor 1 family. As to expression, expressed in central nervous system, as well as in subsets of neurons in each segment of the developing ventral ganglia.

The protein localises to the cell membrane. In terms of biological role, receptor for tachykinin-like peptides. This Drosophila melanogaster (Fruit fly) protein is Tachykinin-like peptides receptor 86C (TkR86C).